The sequence spans 305 residues: Testis-expressed protein 52 (305 aa).

The interval 284-305 (HLSKAQASKSPARKRKRRPGHF) is disordered. Positions 294 to 305 (PARKRKRRPGHF) are enriched in basic residues.

In terms of tissue distribution, expressed in Testis.

This is Testis-expressed protein 52 from Homo sapiens (Human).